Reading from the N-terminus, the 225-residue chain is MSLIVKICGLSTPATLDVTLQGGADMVGFVFFPPSPRHLDLSRARELGAQVRGRAGKVALTVDADDATLGGIIEALRPDLLQLHGKETVARIREIKRTFGLPIMKAIGIETAGDLAALPGYAAVADRVLFDAHPPKDATRPGGLGVPFDWRLLENLAPGIPFMLSGGLTAGNVDAAVRTTRAGGVDVSSGVESAPGVKDAGMIGDFIRAARAAEINLREATSHVG.

It belongs to the TrpF family.

The enzyme catalyses N-(5-phospho-beta-D-ribosyl)anthranilate = 1-(2-carboxyphenylamino)-1-deoxy-D-ribulose 5-phosphate. Its pathway is amino-acid biosynthesis; L-tryptophan biosynthesis; L-tryptophan from chorismate: step 3/5. The chain is N-(5'-phosphoribosyl)anthranilate isomerase from Nitrobacter hamburgensis (strain DSM 10229 / NCIMB 13809 / X14).